The primary structure comprises 563 residues: Pyruvate decarboxylase isozyme 1 (563 aa).

Residue S2 is modified to N-acetylserine. Positions 28, 115, and 157 each coordinate pyruvate. R161 is modified (omega-N-methylarginine). Residue K212 forms a Glycyl lysine isopeptide (Lys-Gly) (interchain with G-Cter in ubiquitin) linkage. At S223 the chain carries Phosphoserine. R224 contacts pyruvate. K233 is covalently cross-linked (Glycyl lysine isopeptide (Lys-Gly) (interchain with G-Cter in ubiquitin)). T266 bears the Phosphothreonine mark. Glycyl lysine isopeptide (Lys-Gly) (interchain with G-Cter in ubiquitin) cross-links involve residues K269 and K332. 2 positions are modified to phosphothreonine: T336 and T353. Residues T390 and 413-415 (GSI) each bind thiamine diphosphate. Residue D444 participates in Mg(2+) binding. Residues 445-446 (GS) and 471-476 (NDGYTI) each bind thiamine diphosphate. N471 and G473 together coordinate Mg(2+). A pyruvate-binding site is contributed by E477. Glycyl lysine isopeptide (Lys-Gly) (interchain with G-Cter in ubiquitin) cross-links involve residues K484, K505, and K520. Position 522 is a phosphothreonine (T522). Phosphoserine is present on S526.

The protein belongs to the TPP enzyme family. As to quaternary structure, homotetramer. It depends on Mg(2+) as a cofactor. Thiamine diphosphate is required as a cofactor. In terms of processing, cleavage of N-terminal methionine and N-terminal acetylation by NAT1/ARD1.

The protein resides in the cytoplasm. The protein localises to the nucleus. It carries out the reaction pyruvate + H(+) = acetaldehyde + CO2. The catalysed reaction is 3-methyl-2-oxobutanoate + H(+) = 2-methylpropanal + CO2. It catalyses the reaction (S)-3-methyl-2-oxopentanoate + H(+) = 2-methylbutanal + CO2. The enzyme catalyses indole-3-pyruvate + H(+) = indole-3-acetaldehyde + CO2. It carries out the reaction 3-phenylpyruvate + H(+) = 2-phenylacetaldehyde + CO2. The catalysed reaction is 2-oxobutanoate + H(+) = propanal + CO2. It catalyses the reaction 2-oxopentanoate + H(+) = butanal + CO2. The enzyme catalyses 2 acetaldehyde = acetoin. It carries out the reaction acetaldehyde + pyruvate + H(+) = acetoin + CO2. It participates in fermentation; ethanol fermentation. Its pathway is amino-acid degradation; Ehrlich pathway. Its activity is regulated as follows. Allosterically activated by its substrate, pyruvate. In terms of biological role, major of three pyruvate decarboxylases (PDC1, PDC5, PDC6) implicated in the nonoxidative conversion of pyruvate to acetaldehyde and carbon dioxide during alcoholic fermentation. Most of the produced acetaldehyde is subsequently reduced to ethanol, but some is required for cytosolic acetyl-CoA production for biosynthetic pathways. The enzyme is also one of five 2-oxo acid decarboxylases (PDC1, PDC5, PDC6, ARO10, and THI3) able to decarboxylate more complex 2-oxo acids (alpha-ketoacids) than pyruvate, which seem mainly involved in amino acid catabolism. Here the enzyme catalyzes the decarboxylation of amino acids, which, in a first step, have been transaminated to the corresponding 2-oxo acids. In a third step, the resulting aldehydes are reduced to alcohols, collectively referred to as fusel oils or alcohols. Its preferred substrates are the transaminated amino acids derived from threonine (2-oxobutanoate), norvaline (2-oxopentanoate), valine (3-methyl-2-oxobutanoate, also alpha-keto-isovalerate), isoleucine ((3S)-3-methyl-2-oxopentanoate, also alpha-keto-beta-methylvalerate), phenylalanine (phenylpyruvate), and tryptophan (3-(indol-3-yl)pyruvate), whereas transaminated leucine is no substrate. In a side-reaction the carbanionic intermediate (or active aldehyde) generated by decarboxylation or by activation of an aldehyde can react with an aldehyde via condensation (or carboligation) yielding a 2-hydroxy ketone, collectively called acyloins. In Saccharomyces cerevisiae (strain ATCC 204508 / S288c) (Baker's yeast), this protein is Pyruvate decarboxylase isozyme 1.